A 471-amino-acid polypeptide reads, in one-letter code: Glutamate--tRNA ligase (471 aa).

Residues 9–19 carry the 'HIGH' region motif; the sequence is PSPTGYLHVGG. The Zn(2+) site is built by Cys98, Cys100, Cys125, and His127. The 'KMSKS' region motif lies at 237-241; the sequence is KLSKR. Position 240 (Lys240) interacts with ATP.

Belongs to the class-I aminoacyl-tRNA synthetase family. Glutamate--tRNA ligase type 1 subfamily. Monomer. Requires Zn(2+) as cofactor.

It localises to the cytoplasm. The enzyme catalyses tRNA(Glu) + L-glutamate + ATP = L-glutamyl-tRNA(Glu) + AMP + diphosphate. Functionally, catalyzes the attachment of glutamate to tRNA(Glu) in a two-step reaction: glutamate is first activated by ATP to form Glu-AMP and then transferred to the acceptor end of tRNA(Glu). This chain is Glutamate--tRNA ligase, found in Shigella dysenteriae serotype 1 (strain Sd197).